We begin with the raw amino-acid sequence, 182 residues long: uncharacterized protein (182 aa).

Its subcellular location is the mitochondrion. This is an uncharacterized protein from Schizosaccharomyces pombe (strain 972 / ATCC 24843) (Fission yeast).